A 352-amino-acid polypeptide reads, in one-letter code: UDP-N-acetylglucosamine--N-acetylmuramyl-(pentapeptide) pyrophosphoryl-undecaprenol N-acetylglucosamine transferase (352 aa).

UDP-N-acetyl-alpha-D-glucosamine-binding residues include S195 and Q287.

The protein belongs to the glycosyltransferase 28 family. MurG subfamily.

Its subcellular location is the cell membrane. The enzyme catalyses Mur2Ac(oyl-L-Ala-gamma-D-Glu-L-Lys-D-Ala-D-Ala)-di-trans,octa-cis-undecaprenyl diphosphate + UDP-N-acetyl-alpha-D-glucosamine = beta-D-GlcNAc-(1-&gt;4)-Mur2Ac(oyl-L-Ala-gamma-D-Glu-L-Lys-D-Ala-D-Ala)-di-trans,octa-cis-undecaprenyl diphosphate + UDP + H(+). It functions in the pathway cell wall biogenesis; peptidoglycan biosynthesis. Its function is as follows. Cell wall formation. Catalyzes the transfer of a GlcNAc subunit on undecaprenyl-pyrophosphoryl-MurNAc-pentapeptide (lipid intermediate I) to form undecaprenyl-pyrophosphoryl-MurNAc-(pentapeptide)GlcNAc (lipid intermediate II). The chain is UDP-N-acetylglucosamine--N-acetylmuramyl-(pentapeptide) pyrophosphoryl-undecaprenol N-acetylglucosamine transferase from Streptococcus pneumoniae (strain ATCC BAA-255 / R6).